Reading from the N-terminus, the 273-residue chain is MMKRQFEDVTRIVIKIGTSSLVLPTGKINLEKIDQLAFVISSLMNKGKEVILVSSGAMGFGLDILKMEKRPTNLAKQQAVSSVGQVAMMSLYSQIFAYYQTNVSQILLTRDVVVFPESLANVTNAFESLISLGIVPIVNENDAVSVDEMDHATKFGDNDRLSAVVAGITKADLLIMLSDIDGLFDKNPTIYEDAQLRSHVANITQEIIASAGGAGSKFGTGGMLSKVQSAQMVFENKGQMVLMNGANPRDILRVLEGQPLGTWFKQIEEVRHD.

Residue K15 participates in ATP binding. Substrate is bound by residues S55, D142, and N158. Residues 178-179 (SD) and 220-226 (TGGMLSK) each bind ATP.

It belongs to the glutamate 5-kinase family.

The protein localises to the cytoplasm. It carries out the reaction L-glutamate + ATP = L-glutamyl 5-phosphate + ADP. Its pathway is amino-acid biosynthesis; L-proline biosynthesis; L-glutamate 5-semialdehyde from L-glutamate: step 1/2. Its function is as follows. Catalyzes the transfer of a phosphate group to glutamate to form L-glutamate 5-phosphate. In Streptococcus pyogenes serotype M1, this protein is Glutamate 5-kinase.